The following is a 2313-amino-acid chain: Cell surface glycoprotein 1 (2313 aa).

The N-terminal stretch at 1 to 28 (MKRKNKVLSILLTLLLIISTTSVNMSFA) is a signal peptide. Cohesin domains lie at 34-197 (IEMV…VVEA) and 205-367 (VALE…EIVV). The span at 369–378 (GEEPGEEPTE) shows a compositional bias: acidic residues. A disordered region spans residues 369-400 (GEEPGEEPTEEPVPTETSVDPTPTVTEEPVPS). Residues 380–400 (PVPTETSVDPTPTVTEEPVPS) show a composition bias toward low complexity. A Cohesin 3 domain is found at 407 to 569 (VIMELDKTKV…SVVQPGEIVV (163 aa)). Residues 571 to 580 (GEEPGEEPTE) are compositionally biased toward acidic residues. Residues 571 to 602 (GEEPGEEPTEEPVPTETSVDPTPTVTEEPVPS) are disordered. Residues 582-602 (PVPTETSVDPTPTVTEEPVPS) are compositionally biased toward low complexity. Residues 609–771 (VIMELDKTKV…SVVQPGEIVA (163 aa)) form the Cohesin 4 domain. Residues 772-782 (EGEEPGEEPTE) are compositionally biased toward acidic residues. Positions 772-805 (EGEEPGEEPTEEPVPTETSADPTPTVTEEPVPSE) are disordered. The segment covering 784–803 (PVPTETSADPTPTVTEEPVP) has biased composition (low complexity). A Cohesin 5 domain is found at 811 to 973 (VIMELDKTKV…SVVQPGEIVA (163 aa)). The span at 974–984 (EGEEPGEEPTE) shows a compositional bias: acidic residues. Residues 974-1007 (EGEEPGEEPTEEPVPTETPVDPTPTVTEEPVPSE) form a disordered region. Low complexity predominate over residues 986-1007 (PVPTETPVDPTPTVTEEPVPSE). In terms of domain architecture, Cohesin 6 spans 1013-1175 (VIMELDKTKV…SVVQPGEIVA (163 aa)). Disordered regions lie at residues 1177 to 1203 (GEEP…EPVP) and 1374 to 2111 (ASDE…PDGS). Positions 1184-1203 (PVPTETPVDPTPTVTEEPVP) are enriched in low complexity. A Cohesin 7 domain is found at 1211 to 1375 (VIMELDKTKV…IQPAPIKAAS (165 aa)). A compositionally biased stretch (low complexity) spans 1376-1390 (DEPIPTDTPSDEPTP). The segment at 1383 to 2025 (TPSDEPTPSD…SDEPTPSETP (643 aa)) is approximate tandem repeats of T-P-S-D-E-P. Residues 1391–1411 (SDEPTPSDEPTPSDEPTPSDE) are compositionally biased toward pro residues. Low complexity predominate over residues 1423-1433 (PTDTPSDEPTP). A compositionally biased stretch (pro residues) spans 1434–1454 (SDEPTPSDEPTPSDEPTPSDE). Over residues 1466 to 1476 (PTDTPSDEPTP) the composition is skewed to low complexity. A compositionally biased stretch (pro residues) spans 1477–1497 (SDEPTPSDEPTPSDEPTPSDE). The span at 1509–1519 (PTDTPSDEPTP) shows a compositional bias: low complexity. Residues 1520-1540 (SDEPTPSDEPTPSDEPTPSDE) are compositionally biased toward pro residues. Residues 1552-1562 (PTDTPSDEPTP) are compositionally biased toward low complexity. A compositionally biased stretch (pro residues) spans 1563-1595 (SDEPTPSDEPTPSDEPTPSDEPTPSDEPTPSDE). The span at 1607 to 1617 (PTDTPSDEPTP) shows a compositional bias: low complexity. Positions 1618 to 1650 (SDEPTPSDEPTPSDEPTPSDEPTPSDEPTPSDE) are enriched in pro residues. Over residues 1662-1672 (PTDTPSDEPTP) the composition is skewed to low complexity. Over residues 1673-1693 (SDEPTPSDEPTPSDEPTPSDE) the composition is skewed to pro residues. A compositionally biased stretch (low complexity) spans 1705-1715 (PTDTPSDEPTP). Residues 1716 to 1736 (SDEPTPSDEPTPSDEPTPSDE) show a composition bias toward pro residues. Residues 1748 to 1758 (PTDTPSDEPTP) show a composition bias toward low complexity. Residues 1759-1779 (SDEPTPSDEPTPSDEPTPSDE) are compositionally biased toward pro residues. A compositionally biased stretch (low complexity) spans 1791 to 1801 (PTDTPSDEPTP). Residues 1802-1822 (SDEPTPSDEPTPSDEPTPSDE) show a composition bias toward pro residues. Positions 1834 to 1844 (PTDTPSDEPTP) are enriched in low complexity. Residues 1845–1865 (SDEPTPSDEPTPSDEPTPSDE) show a composition bias toward pro residues. Residues 1877 to 1887 (PTDTPSDEPTP) are compositionally biased toward low complexity. The span at 1888 to 1908 (SDEPTPSDEPTPSDEPTPSDE) shows a compositional bias: pro residues. The segment covering 1920 to 1930 (PTDTPSDEPTP) has biased composition (low complexity). Over residues 1931–1963 (SDEPTPSDEPTPSDEPTPSDEPTPSDEPTPSDE) the composition is skewed to pro residues. The segment covering 1975–1985 (PTDTPSDEPTP) has biased composition (low complexity). 2 stretches are compositionally biased toward pro residues: residues 1986-2018 (SDEP…PSDE) and 2027-2039 (EPTP…PTPS). The segment covering 2045–2062 (GSGGSGGSGGGGGGGGGT) has biased composition (gly residues). 3 consecutive SLH domains span residues 2067–2140 (PTPT…YGAQ), 2141–2204 (SASP…EIMS), and 2211–2274 (ISNP…GAPK). Positions 2073-2082 (SKPTSTPAPT) are enriched in low complexity.

As to quaternary structure, assembled into mono-layered crystalline arrays.

The protein resides in the secreted. It localises to the cell wall. The protein localises to the S-layer. This Acetivibrio thermocellus (strain ATCC 27405 / DSM 1237 / JCM 9322 / NBRC 103400 / NCIMB 10682 / NRRL B-4536 / VPI 7372) (Clostridium thermocellum) protein is Cell surface glycoprotein 1 (olpB).